The chain runs to 453 residues: Adenosylmethionine-8-amino-7-oxononanoate aminotransferase (453 aa).

118 to 119 serves as a coordination point for pyridoxal 5'-phosphate; the sequence is GA. Tyrosine 151 contacts substrate. Aspartate 257 is a binding site for pyridoxal 5'-phosphate. Positions 286, 321, and 416 each coordinate substrate. Lysine 286 is modified (N6-(pyridoxal phosphate)lysine).

This sequence belongs to the class-III pyridoxal-phosphate-dependent aminotransferase family. BioA subfamily. As to quaternary structure, homodimer. Pyridoxal 5'-phosphate is required as a cofactor.

Its subcellular location is the cytoplasm. The enzyme catalyses (8S)-8-amino-7-oxononanoate + S-adenosyl-L-methionine = S-adenosyl-4-methylsulfanyl-2-oxobutanoate + (7R,8S)-7,8-diammoniononanoate. It participates in cofactor biosynthesis; biotin biosynthesis; 7,8-diaminononanoate from 8-amino-7-oxononanoate (SAM route): step 1/1. Catalyzes the transfer of the alpha-amino group from S-adenosyl-L-methionine (SAM) to 7-keto-8-aminopelargonic acid (KAPA) to form 7,8-diaminopelargonic acid (DAPA). It is the only aminotransferase known to utilize SAM as an amino donor. The protein is Adenosylmethionine-8-amino-7-oxononanoate aminotransferase of Aquifex aeolicus (strain VF5).